Consider the following 227-residue polypeptide: Mitochondrial inner membrane protease ATP23 (227 aa).

Residue H129 participates in a divalent metal cation binding. The active site involves E130. H133 serves as a coordination point for a divalent metal cation.

Belongs to the peptidase M76 family.

The protein localises to the mitochondrion inner membrane. In terms of biological role, has a dual role in the assembly of mitochondrial ATPase. Acts as a protease that removes N-terminal residues of mitochondrial ATPase CF(0) subunit 6 at the intermembrane space side. Also involved in the correct assembly of the membrane-embedded ATPase CF(0) particle, probably mediating association of subunit 6 with the subunit 9 ring. The sequence is that of Mitochondrial inner membrane protease ATP23 (ATP23) from Cryptococcus neoformans var. neoformans serotype D (strain B-3501A) (Filobasidiella neoformans).